A 139-amino-acid polypeptide reads, in one-letter code: Small ribosomal subunit protein uS12 (139 aa).

The residue at position 102 (D102) is a 3-methylthioaspartic acid. The segment at 116–139 (DTTGVAKRSQGRSKYGAKRPKKSK) is disordered. Residues 124–139 (SQGRSKYGAKRPKKSK) are compositionally biased toward basic residues.

It belongs to the universal ribosomal protein uS12 family. Part of the 30S ribosomal subunit. Contacts proteins S8 and S17. May interact with IF1 in the 30S initiation complex.

In terms of biological role, with S4 and S5 plays an important role in translational accuracy. Functionally, interacts with and stabilizes bases of the 16S rRNA that are involved in tRNA selection in the A site and with the mRNA backbone. Located at the interface of the 30S and 50S subunits, it traverses the body of the 30S subunit contacting proteins on the other side and probably holding the rRNA structure together. The combined cluster of proteins S8, S12 and S17 appears to hold together the shoulder and platform of the 30S subunit. In Mesomycoplasma hyopneumoniae (strain 7448) (Mycoplasma hyopneumoniae), this protein is Small ribosomal subunit protein uS12.